We begin with the raw amino-acid sequence, 351 residues long: MSGIVTYGSYIPRYRIKPDEIARVWGENPERIKNGIFILSKSVPAPDEDVATISVEAARNALKRKKINPKEIGAIYVGSESHPYAVKPTATIVGSAIGVDFSLFAADYEFACKAGTAGMQNVKAMVDAGMIKYGLAIGADTSQGAPGDALEYSASAGGSAFIIGKDDVIAEINSTLSVASDTPDFWRREGQPYPSHGERFTGEPAYFRHVVNAAKMMMERMETQPKDYDYVVFHQPNGKFPTRAAKLLGFEEKQYKDGLITPYIGNTYSGSMMTGLSSILDVSKPGDHILAVSFGSGAGSDAFDITVTDRIEEMDRNKAPTIKKMLEKIKWVDYAIYAKYKKKIVLGDGIE.

Glutamate 80 (proton donor/acceptor) is an active-site residue. Cysteine 112 (acyl-thioester intermediate) is an active-site residue. (3S)-3-hydroxy-3-methylglutaryl-CoA contacts are provided by cysteine 112 and serine 153. A CoA-binding site is contributed by arginine 199. Positions 201 and 234 each coordinate (3S)-3-hydroxy-3-methylglutaryl-CoA. Histidine 234 serves as the catalytic Proton donor/acceptor. Position 239 (lysine 239) interacts with CoA. (3S)-3-hydroxy-3-methylglutaryl-CoA-binding residues include arginine 243, asparagine 266, and serine 296.

It belongs to the thiolase-like superfamily. Archaeal HMG-CoA synthase family. In terms of assembly, interacts with acetoacetyl-CoA thiolase that catalyzes the precedent step in the pathway and with a DUF35 protein. The acetoacetyl-CoA thiolase/HMG-CoA synthase complex channels the intermediate via a fused CoA-binding site, which allows for efficient coupling of the endergonic thiolase reaction with the exergonic HMGCS reaction.

It carries out the reaction acetoacetyl-CoA + acetyl-CoA + H2O = (3S)-3-hydroxy-3-methylglutaryl-CoA + CoA + H(+). The protein operates within metabolic intermediate biosynthesis; (R)-mevalonate biosynthesis; (R)-mevalonate from acetyl-CoA: step 2/3. Functionally, catalyzes the condensation of acetyl-CoA with acetoacetyl-CoA to form 3-hydroxy-3-methylglutaryl-CoA (HMG-CoA). Functions in the mevalonate (MVA) pathway leading to isopentenyl diphosphate (IPP), a key precursor for the biosynthesis of isoprenoid compounds that are building blocks of archaeal membrane lipids. The sequence is that of Hydroxymethylglutaryl-CoA synthase from Thermoplasma volcanium (strain ATCC 51530 / DSM 4299 / JCM 9571 / NBRC 15438 / GSS1).